Reading from the N-terminus, the 519-residue chain is 2-isopropylmalate synthase (519 aa).

One can recognise a Pyruvate carboxyltransferase domain in the interval 12–274 (IRIFDTTLRD…DTSIHTSRIV (263 aa)). Aspartate 21, histidine 209, histidine 211, and asparagine 245 together coordinate Mn(2+). The regulatory domain stretch occupies residues 396-519 (RLASMTISDV…MQNKQNTALA (124 aa)).

It belongs to the alpha-IPM synthase/homocitrate synthase family. LeuA type 1 subfamily. In terms of assembly, homodimer. Mn(2+) serves as cofactor.

The protein resides in the cytoplasm. The catalysed reaction is 3-methyl-2-oxobutanoate + acetyl-CoA + H2O = (2S)-2-isopropylmalate + CoA + H(+). Its pathway is amino-acid biosynthesis; L-leucine biosynthesis; L-leucine from 3-methyl-2-oxobutanoate: step 1/4. In terms of biological role, catalyzes the condensation of the acetyl group of acetyl-CoA with 3-methyl-2-oxobutanoate (2-ketoisovalerate) to form 3-carboxy-3-hydroxy-4-methylpentanoate (2-isopropylmalate). The protein is 2-isopropylmalate synthase of Xylella fastidiosa (strain M23).